A 211-amino-acid polypeptide reads, in one-letter code: Cytidylate kinase (211 aa).

7 to 15 (GPAASGKGT) contacts ATP.

It belongs to the cytidylate kinase family. Type 1 subfamily.

The protein resides in the cytoplasm. The catalysed reaction is CMP + ATP = CDP + ADP. The enzyme catalyses dCMP + ATP = dCDP + ADP. The polypeptide is Cytidylate kinase (Rhodopseudomonas palustris (strain BisA53)).